We begin with the raw amino-acid sequence, 298 residues long: Transcription factor RAX2 (298 aa).

HTH myb-type domains lie at 9 to 62 and 63 to 117; these read KANV…LNYL and RPNI…KKKL. 2 consecutive DNA-binding regions (H-T-H motif) follow at residues 38 to 62 and 90 to 113; these read WIAL…LNYL and WSVI…NTKL.

Ubiquitous, with higher levels in roots, flowers, and shoot tips. Found in all cells of the shoot tips.

Its subcellular location is the nucleus. Its function is as follows. Transcription activator. Positively regulates axillary meristems (AMs) formation and development, especially during inflorescence. This chain is Transcription factor RAX2 (RAX2), found in Arabidopsis thaliana (Mouse-ear cress).